The sequence spans 357 residues: O-methyltransferase 1, chloroplastic (357 aa).

The N-terminal 53 residues, 1–53 (MPVLPWLAAAATTPVRRSPPLPATPRALLRLPASSFPPWSNCAKSGLPPRGPF), are a transit peptide targeting the chloroplast. The interval 50–71 (RGPFATAADTPLGGSLPEPEEE) is disordered.

This sequence belongs to the methyltransferase superfamily. LCMT family. Expressed in roots, leaf sheaths, flag leaves and panicles.

The protein localises to the plastid. The protein resides in the chloroplast. It catalyses the reaction N-acetylserotonin + S-adenosyl-L-methionine = melatonin + S-adenosyl-L-homocysteine + H(+). The protein operates within aromatic compound metabolism; melatonin biosynthesis; melatonin from serotonin: step 1/2. Involved in melatonin biosynthesis. Can function as acetylserotonin O-methyltransferase. Catalyzes the transfer of a methyl group onto N-acetylserotonin, producing melatonin (N-acetyl-5-methoxytryptamine). Involved in the regulation of jasmonate- and brassinosteroid-mediated plant growth and defense responses. The protein is O-methyltransferase 1, chloroplastic of Oryza sativa subsp. japonica (Rice).